Consider the following 174-residue polypeptide: Probable E3 ubiquitin-protein ligase RHA4A (174 aa).

The RING-type; atypical zinc-finger motif lies at 105 to 147; the sequence is CCVCLGEFELKEELVEMPLCKHIFHLDCIHLWLYSHNTCPLCR. The tract at residues 155-174 is disordered; the sequence is TKTSVDDDNDHPDSPQTSPV.

Expressed in stems, flowers, cauline leaves and roots.

The enzyme catalyses S-ubiquitinyl-[E2 ubiquitin-conjugating enzyme]-L-cysteine + [acceptor protein]-L-lysine = [E2 ubiquitin-conjugating enzyme]-L-cysteine + N(6)-ubiquitinyl-[acceptor protein]-L-lysine.. The protein operates within protein modification; protein ubiquitination. Probable E3 ubiquitin-protein ligase that may possess E3 ubiquitin ligase activity in vitro. The polypeptide is Probable E3 ubiquitin-protein ligase RHA4A (Arabidopsis thaliana (Mouse-ear cress)).